The chain runs to 220 residues: Probable transcriptional regulator NRG2 (220 aa).

2 C2H2-type zinc fingers span residues 153-175 and 181-205; these read HFCKICSTGFTTSGHLSRHNRIH and HICPHEGCGQRFSRHDNCNQHYRTH.

It is found in the nucleus. Its function is as follows. Transcriptional repressor. The sequence is that of Probable transcriptional regulator NRG2 (NRG2) from Saccharomyces cerevisiae (strain ATCC 204508 / S288c) (Baker's yeast).